Reading from the N-terminus, the 215-residue chain is Peroxiredoxin (215 aa).

The 156-residue stretch at 6-161 (PLIGEEFPRL…ILRAVRALQT (156 aa)) folds into the Thioredoxin domain. Residue Cys-48 is the Cysteine sulfenic acid (-SOH) intermediate of the active site. Arg-124 is a substrate binding site. Cys-205 and Cys-211 are joined by a disulfide.

The protein belongs to the peroxiredoxin family. Prx6 subfamily. Homodecamer. Pentamer of dimers that assemble into a ring structure.

The protein localises to the cytoplasm. It catalyses the reaction a hydroperoxide + [thioredoxin]-dithiol = an alcohol + [thioredoxin]-disulfide + H2O. Thiol-specific peroxidase that catalyzes the reduction of hydrogen peroxide and organic hydroperoxides to water and alcohols, respectively. Plays a role in cell protection against oxidative stress by detoxifying peroxides. This is Peroxiredoxin from Thermotoga petrophila (strain ATCC BAA-488 / DSM 13995 / JCM 10881 / RKU-1).